Here is a 552-residue protein sequence, read N- to C-terminus: uncharacterized protein (552 aa).

This is an uncharacterized protein from Bacillus subtilis (strain 168).